The chain runs to 287 residues: 4-hydroxybenzoate octaprenyltransferase (287 aa).

A run of 9 helical transmembrane segments spans residues 20–40, 43–63, 94–114, 115–135, 137–157, 159–179, 210–230, 235–255, and 266–286; these read IGSL…ADGL, MHVL…GCVI, LGLF…MNTL, TIML…MKRY, HLPQ…AYAA, AGEL…WTIA, IIIG…GHSL, IYYW…RLIG, and FLNN…SVMM.

Belongs to the UbiA prenyltransferase family. Mg(2+) is required as a cofactor.

The protein resides in the cell inner membrane. The enzyme catalyses all-trans-octaprenyl diphosphate + 4-hydroxybenzoate = 4-hydroxy-3-(all-trans-octaprenyl)benzoate + diphosphate. It participates in cofactor biosynthesis; ubiquinone biosynthesis. Catalyzes the prenylation of para-hydroxybenzoate (PHB) with an all-trans polyprenyl group. Mediates the second step in the final reaction sequence of ubiquinone-8 (UQ-8) biosynthesis, which is the condensation of the polyisoprenoid side chain with PHB, generating the first membrane-bound Q intermediate 3-octaprenyl-4-hydroxybenzoate. The polypeptide is 4-hydroxybenzoate octaprenyltransferase (Photobacterium profundum (strain SS9)).